The following is a 204-amino-acid chain: Ribosome maturation factor RimP (204 aa).

The disordered stretch occupies residues 176-204 (GNFDESQFDEIEESEGEEADEAEQPPTKH). Residues 181–198 (SQFDEIEESEGEEADEAE) are compositionally biased toward acidic residues.

Belongs to the RimP family.

It is found in the cytoplasm. Its function is as follows. Required for maturation of 30S ribosomal subunits. In Cereibacter sphaeroides (strain ATCC 17029 / ATH 2.4.9) (Rhodobacter sphaeroides), this protein is Ribosome maturation factor RimP.